A 697-amino-acid polypeptide reads, in one-letter code: MSKINKLEHIRNIGICAHIDAGKTTTTERILYYTGKSHKIGEVHEGGATMDWMEQEQERGITITSAATTCRWQDKIINIIDTPGHVDFTIEVERSLRVLDGAVAVFDGVAGVEPQSETVWRQADKYNVPRMCFVNKMDRMGADFYRCVEMLKDRLGAKPLVIQLPVGIEENFKGIIDLVKMKVVIWKDESLGAEYFEEDIPADMKDKAEEYRAKLLDMVVELDDHVMEKYLSGEEVTAEEIKRLIRKGTISAAFYPVLCGSAFKNKGVQPLLDAVVDFLPSPTDIGIVKGMEVSTGEEKDFPISVTEPFAALAFKIMNDPFVGSLTFIRIYSGKITSGTTVINTVKNKREKIGRMLLMHSNNREDVKEASAGDIVALAGLKDTTTGDTLSDIDQPVILERMEFPEPVIELAVEPKSTADQEKMGLALSRLAAEDPSFRVSTDHETGQTVIKGMGELHLEIIIDRMRREFKVEANIGAPQVAYRETITKACEIDYTHKKQSGGAGQFARVKIIFEPLKDVKDLKDEDKIFVFESKIIGGAVPKEYIPGVEKGLNNIRETGVIAGYPMIDFKATLVDGAFHDVDSSVLAFEIAAKAAFREGMPKGNPKLLEPIMQVEVITPDEYMGDIIGDLNSRRGQIQSMDPRGNAQVVTANVPLAEMFGYVNTLRSLSQGRAQFSMIFSHYDQVPSQVADIIKAKK.

One can recognise a tr-type G domain in the interval 8–283 (EHIRNIGICA…AVVDFLPSPT (276 aa)). GTP-binding positions include 17–24 (AHIDAGKT), 81–85 (DTPGH), and 135–138 (NKMD).

This sequence belongs to the TRAFAC class translation factor GTPase superfamily. Classic translation factor GTPase family. EF-G/EF-2 subfamily.

It localises to the cytoplasm. Functionally, catalyzes the GTP-dependent ribosomal translocation step during translation elongation. During this step, the ribosome changes from the pre-translocational (PRE) to the post-translocational (POST) state as the newly formed A-site-bound peptidyl-tRNA and P-site-bound deacylated tRNA move to the P and E sites, respectively. Catalyzes the coordinated movement of the two tRNA molecules, the mRNA and conformational changes in the ribosome. In Rickettsia massiliae (strain Mtu5), this protein is Elongation factor G.